We begin with the raw amino-acid sequence, 1339 residues long: Receptor tyrosine-protein kinase erbB-3 (1339 aa).

The N-terminal stretch at methionine 1–glycine 19 is a signal peptide. Residues serine 20–valine 643 lie on the Extracellular side of the membrane. Asparagine 126 carries an N-linked (GlcNAc...) asparagine glycan. Disulfide bonds link cysteine 186–cysteine 194, cysteine 190–cysteine 202, cysteine 210–cysteine 218, cysteine 214–cysteine 226, cysteine 227–cysteine 235, cysteine 231–cysteine 243, cysteine 246–cysteine 255, cysteine 259–cysteine 286, cysteine 290–cysteine 301, cysteine 305–cysteine 320, and cysteine 323–cysteine 327. The N-linked (GlcNAc...) asparagine glycan is linked to asparagine 250. Asparagine 353, asparagine 408, asparagine 414, asparagine 437, and asparagine 469 each carry an N-linked (GlcNAc...) asparagine glycan. 10 disulfide bridges follow: cysteine 500–cysteine 509, cysteine 504–cysteine 517, cysteine 520–cysteine 529, cysteine 533–cysteine 549, cysteine 552–cysteine 565, cysteine 556–cysteine 573, cysteine 576–cysteine 585, cysteine 589–cysteine 610, cysteine 613–cysteine 621, and cysteine 617–cysteine 629. N-linked (GlcNAc...) asparagine glycosylation occurs at asparagine 522. Asparagine 566 carries an N-linked (GlcNAc...) asparagine glycan. Asparagine 616 is a glycosylation site (N-linked (GlcNAc...) asparagine). A helical transmembrane segment spans residues isoleucine 644–leucine 662. At tyrosine 663–threonine 1339 the chain is on the cytoplasmic side. Serine 684 is subject to Phosphoserine. Positions leucine 707 to threonine 964 constitute a Protein kinase domain. Residues leucine 713–valine 721, lysine 740, glutamine 786–leucine 788, and aspartate 832–asparagine 837 contribute to the ATP site. Aspartate 832 functions as the Proton acceptor in the catalytic mechanism. At serine 980 the chain carries Phosphoserine. Residues serine 1023–threonine 1036 show a composition bias toward low complexity. Disordered stretches follow at residues serine 1023–methionine 1052 and proline 1078–glutamate 1215. Residues arginine 1039–methionine 1052 show a composition bias toward polar residues. Residues glycine 1172–glycine 1184 are compositionally biased toward low complexity. Over residues threonine 1185–glutamate 1195 the composition is skewed to acidic residues.

It belongs to the protein kinase superfamily. Tyr protein kinase family. EGF receptor subfamily. Monomer and homodimer. Heterodimer with each of the other ERBB receptors (Potential). Interacts with CSPG5, PA2G4, GRB7, MYOC and MUC1. Found in a ternary complex with NRG1 and ITGAV:ITGB3 or ITGA6:ITGB4. Autophosphorylated. Ligand-binding increases phosphorylation on tyrosine residues and promotes its association with the p85 subunit of phosphatidylinositol 3-kinase.

Its subcellular location is the membrane. The catalysed reaction is L-tyrosyl-[protein] + ATP = O-phospho-L-tyrosyl-[protein] + ADP + H(+). In terms of biological role, tyrosine-protein kinase that plays an essential role as cell surface receptor for neuregulins. Binds to neuregulin-1 (NRG1) and is activated by it; ligand-binding increases phosphorylation on tyrosine residues and promotes its association with the p85 subunit of phosphatidylinositol 3-kinase. May also be activated by CSPG5. Involved in the regulation of myeloid cell differentiation. The protein is Receptor tyrosine-protein kinase erbB-3 (Erbb3) of Rattus norvegicus (Rat).